The sequence spans 373 residues: Queuine tRNA-ribosyltransferase (373 aa).

D93 acts as the Proton acceptor in catalysis. Substrate-binding positions include 93 to 97 (DSGGF), D147, Q189, and G216. Residues 247 to 253 (GVGAPED) form an RNA binding region. The active-site Nucleophile is D266. The interval 271-275 (TRIAR) is RNA binding; important for wobble base 34 recognition. Zn(2+) contacts are provided by C304, C306, C309, and H335.

It belongs to the queuine tRNA-ribosyltransferase family. As to quaternary structure, homodimer. Within each dimer, one monomer is responsible for RNA recognition and catalysis, while the other monomer binds to the replacement base PreQ1. It depends on Zn(2+) as a cofactor.

It catalyses the reaction 7-aminomethyl-7-carbaguanine + guanosine(34) in tRNA = 7-aminomethyl-7-carbaguanosine(34) in tRNA + guanine. Its pathway is tRNA modification; tRNA-queuosine biosynthesis. Catalyzes the base-exchange of a guanine (G) residue with the queuine precursor 7-aminomethyl-7-deazaguanine (PreQ1) at position 34 (anticodon wobble position) in tRNAs with GU(N) anticodons (tRNA-Asp, -Asn, -His and -Tyr). Catalysis occurs through a double-displacement mechanism. The nucleophile active site attacks the C1' of nucleotide 34 to detach the guanine base from the RNA, forming a covalent enzyme-RNA intermediate. The proton acceptor active site deprotonates the incoming PreQ1, allowing a nucleophilic attack on the C1' of the ribose to form the product. After dissociation, two additional enzymatic reactions on the tRNA convert PreQ1 to queuine (Q), resulting in the hypermodified nucleoside queuosine (7-(((4,5-cis-dihydroxy-2-cyclopenten-1-yl)amino)methyl)-7-deazaguanosine). The chain is Queuine tRNA-ribosyltransferase from Halothermothrix orenii (strain H 168 / OCM 544 / DSM 9562).